The primary structure comprises 410 residues: NIPA-like protein 3 (410 aa).

The tract at residues 1–24 (MDGAHSAGLQLQPLPPTSGATSTS) is disordered. 9 helical membrane passes run 37-57 (NLIGALLAIFGHLVVSIALNL), 80-100 (WWLGLLLLLLGELGVFASYAF), 105-125 (LIVPLSAVSVIASAIIGIIFI), 139-159 (VLSFVGCGLAIVGTYLLVTFA), 175-195 (LVSWPFLLYMLVAIVLFCLLL), 206-226 (IVVILLLVALLGSMTVVTVKA), 244-264 (PIFYVMFVCMVATAIYQATFL), 275-295 (LIASVGYILSTTAAITAGAIF), and 304-324 (ALHICMFALGCLIAFLGVFLI). Position 376 is a phosphoserine (Ser-376). The disordered stretch occupies residues 389–410 (EEHSSRSTPGVPYRVLEHTKKE).

Belongs to the NIPA family.

It localises to the membrane. This chain is NIPA-like protein 3 (Nipal3), found in Mus musculus (Mouse).